The primary structure comprises 132 residues: Agouti-signaling protein (132 aa).

The first 22 residues, 1 to 22, serve as a signal peptide directing secretion; the sequence is MDVTRLLLATLLVFLCFFTAYS. A glycan (N-linked (GlcNAc...) asparagine) is linked at Asn39. The interval 61–87 is disordered; the sequence is QISRKEAEKKRSSKKEASMKKVARPRT. Basic and acidic residues predominate over residues 63–79; it reads SRKEAEKKRSSKKEASM. Intrachain disulfides connect Cys93–Cys108, Cys100–Cys114, Cys107–Cys125, Cys111–Cys132, and Cys116–Cys123. The region spanning 93–132 is the Agouti domain; sequence CVATRDSCKSPAPACCDPCASCQCRFFRSACSCRVLSLNC.

The protein localises to the secreted. Involved in the regulation of melanogenesis. The binding of ASP to MC1R precludes alpha-MSH initiated signaling and thus blocks production of cAMP, leading to a down-regulation of eumelanogenesis (brown/black pigment) and thus increasing synthesis of pheomelanin (yellow/red pigment). This chain is Agouti-signaling protein (ASIP), found in Macaca nigra (Celebes black macaque).